A 376-amino-acid polypeptide reads, in one-letter code: Non-structural protein NS2 (376 aa).

Positions 163–188 are enriched in basic and acidic residues; sequence EEREKGAVEQPHKPAFKTERGMNRPD. The tract at residues 163–201 is disordered; that stretch reads EEREKGAVEQPHKPAFKTERGMNRPDSDEDQNPAGGVVN.

It belongs to the orbivirus non-structural protein NS2 family.

Functionally, single-stranded RNA-binding protein. This chain is Non-structural protein NS2 (Segment-8), found in Antilocapra americana (Pronghorn).